Reading from the N-terminus, the 162-residue chain is Putative 4-hydroxy-4-methyl-2-oxoglutarate aldolase (162 aa).

Residues 75–78 (GDML) and Arg-97 contribute to the substrate site. Asp-98 serves as a coordination point for a divalent metal cation.

This sequence belongs to the class II aldolase/RraA-like family. As to quaternary structure, homotrimer. Requires a divalent metal cation as cofactor.

It carries out the reaction 4-hydroxy-4-methyl-2-oxoglutarate = 2 pyruvate. The enzyme catalyses oxaloacetate + H(+) = pyruvate + CO2. Catalyzes the aldol cleavage of 4-hydroxy-4-methyl-2-oxoglutarate (HMG) into 2 molecules of pyruvate. Also contains a secondary oxaloacetate (OAA) decarboxylase activity due to the common pyruvate enolate transition state formed following C-C bond cleavage in the retro-aldol and decarboxylation reactions. In Pseudomonas paraeruginosa (strain DSM 24068 / PA7) (Pseudomonas aeruginosa (strain PA7)), this protein is Putative 4-hydroxy-4-methyl-2-oxoglutarate aldolase.